We begin with the raw amino-acid sequence, 459 residues long: Disease resistance protein CHL1 (459 aa).

A TIR domain is found at 16–170 (REVDVFLSFC…QIARDISLVV (155 aa)). Glu89 is an active-site residue. The NB-ARC domain occupies 191-401 (VYDLLALEVN…LLKLKAKQGG (211 aa)). Over residues 429–440 (ERKESSQDKSQQ) the composition is skewed to basic and acidic residues. The tract at residues 429–459 (ERKESSQDKSQQESEVAADILIGKESSQDKQ) is disordered.

As to expression, mostly expressed in leaves, stems and roots, and, to a lower extent, in flowers and siliques.

Its subcellular location is the cytoplasm. The enzyme catalyses NAD(+) + H2O = ADP-D-ribose + nicotinamide + H(+). In terms of biological role, confers resistance to low temperatures by limiting chloroplast damage and cell death, thus maintaining growth homeostasis. This is Disease resistance protein CHL1 from Arabidopsis thaliana (Mouse-ear cress).